Reading from the N-terminus, the 711-residue chain is Angiogenic factor with G patch and FHA domains 1 (711 aa).

The span at 1–19 (MASEAPSPPSPSPPPPASP) shows a compositional bias: pro residues. Disordered regions lie at residues 1–23 (MASE…EPEL), 137–184 (ALDP…EGPA), 260–297 (PYQT…SEDQ), and 311–400 (EHSG…EDEE). Alanine 2 bears the N-acetylalanine mark. Residues serine 7 and serine 12 each carry the phosphoserine modification. Positions 19–85 (PEPELAQLRR…SKILHCGKNE (67 aa)) form a coiled coil. The segment covering 167 to 176 (AVTSDSQESV) has biased composition (polar residues). The segment covering 270 to 279 (RERRLKKRRK) has biased composition (basic residues). Residues 287–297 (NEEKDLSSEDQ) show a composition bias toward basic and acidic residues. Phosphoserine is present on serine 344. Residues 361-370 (SESEPEEGEI) show a composition bias toward acidic residues. The span at 374 to 391 (QSEKSYDGDSSSGDRETS) shows a compositional bias: basic and acidic residues. The region spanning 431-484 (ATIGREKDMEHTVRIPEVAVSKFHAEVYFDHDLQSYVLVDQGSQNGTIVNGKQI) is the FHA domain. Basic and acidic residues-rich tracts occupy residues 579–606 (LKNP…RDDA) and 613–623 (EITDSNKGRKM). The disordered stretch occupies residues 579–623 (LKNPKYKDRAGKRREQVGSEGTFQRDDAPASVHSEITDSNKGRKM). Residues 616 to 662 (DSNKGRKMLEKMGWKRGEGLGKDGGGMKTPIQLQLRRTHAGLGTGKL) form the G-patch domain. Lysine 661 bears the N6-acetyllysine mark. The span at 690 to 699 (FTENKPRKET) shows a compositional bias: basic and acidic residues. The interval 690 to 711 (FTENKPRKETPGAVPWVTGTAE) is disordered.

As to quaternary structure, interacts with the secreted angiogenic factor TNFSF12.

It is found in the cytoplasm. The protein localises to the secreted. Promotes angiogenesis and the proliferation of endothelial cells. Able to bind to endothelial cells and promote cell proliferation, suggesting that it may act in an autocrine fashion. This Mus musculus (Mouse) protein is Angiogenic factor with G patch and FHA domains 1 (Aggf1).